The chain runs to 308 residues: UDP-N-acetylenolpyruvoylglucosamine reductase (308 aa).

An FAD-binding PCMH-type domain is found at 32-196; it reads VGGPAARLYK…ISAKLQLSPG (165 aa). The active site involves arginine 176. The active-site Proton donor is the serine 225. Glutamate 296 is an active-site residue.

This sequence belongs to the MurB family. The cofactor is FAD.

It localises to the cytoplasm. It catalyses the reaction UDP-N-acetyl-alpha-D-muramate + NADP(+) = UDP-N-acetyl-3-O-(1-carboxyvinyl)-alpha-D-glucosamine + NADPH + H(+). The protein operates within cell wall biogenesis; peptidoglycan biosynthesis. In terms of biological role, cell wall formation. This chain is UDP-N-acetylenolpyruvoylglucosamine reductase, found in Legionella pneumophila (strain Corby).